The primary structure comprises 681 residues: MCGIFAYLNYHVPRTRREILETLIKGLQRLEYRGYDSAGVGLDGGNDKDWEANACKIQLIKKKGKVKALDEEVHKQQDMDLDIEFDVHLGIAHTRWATHGEPSPVNSHPQRSDKNNEFIVIHNGIITNYKDLKKFLESKGYDFESETDTETIAKLVKYMYDNWESQDVSFTTLVERVIQQLEGAFALVFKSVHFPGQAVGTRRGSPLLIGVRSEHKLSTDHIPILYRTGKDKKGSCGLSRVDSTTCLFPVEEKAVEYYFASDASAVIEHTNRVIFLEDDDVAAVVDGRLSIHRIKRTARDHPGRAVQTLQMELQQIMKGNFSSFMQKEIFEQPESVVNTMRGRVNFDDYTVNLGGLKDHIKEIQRCRRLILIACGTSYHAGMATRQVLEELTELPVMVELASDFLDRNTPVFRDDVCFFISQSGETADTLMGLRYCKERGALTVGITNTVGSSISRETDCGVHINAGPEIGVASTKAYTSQFVSLVMFALMMCDDRISMQERRKEIMLGLKRLPDLIKEVLSMDDEIQKLATELYHQKSVLIMGRGYHYATCLEGALKIKEITYMHSEGILAGELKHGPLALVDKLMPVIMIIMRDHTYAKCQNALQQVVARQGRPVVICDKEDTETIKNTKRTIKVPHSVDCLQGILSVIPLQLLAFHLAVLRGYDVDFPRNLAKSVTVE.

The active-site For GATase activity is the C2. One can recognise a Glutamine amidotransferase type-2 domain in the interval 2-287 (CGIFAYLNYH…DDDVAAVVDG (286 aa)). S103 and S243 each carry phosphoserine. Residues 295 to 662 (KRTARDHPGR…LQLLAFHLAV (368 aa)) are isomerase. SIS domains follow at residues 359 to 498 (HIKE…DRIS) and 530 to 671 (LATE…VDFP). Residues 376-377 (TS), 421-423 (SQS), T426, and H577 each bind substrate.

Homotetramer, may also exist as homodimers.

The catalysed reaction is D-fructose 6-phosphate + L-glutamine = D-glucosamine 6-phosphate + L-glutamate. It functions in the pathway nucleotide-sugar biosynthesis; UDP-N-acetyl-alpha-D-glucosamine biosynthesis; alpha-D-glucosamine 6-phosphate from D-fructose 6-phosphate: step 1/1. Its activity is regulated as follows. Inhibited by 4,4'-dithiodipyridine. Controls the flux of glucose into the hexosamine pathway. Most likely involved in regulating the availability of precursors for N- and O-linked glycosylation of proteins. Regulates the circadian expression of clock genes BMAL1 and CRY1. Has a role in fine tuning the metabolic fluctuations of cytosolic UDP-GlcNAc and its effects on hyaluronan synthesis that occur during tissue remodeling. The sequence is that of Glutamine--fructose-6-phosphate aminotransferase [isomerizing] 1 (Gfpt1) from Rattus norvegicus (Rat).